The chain runs to 376 residues: Nuclear egress protein 1 (376 aa).

At Ser-19 the chain carries Phosphoserine. Positions 22-57 (RKRRQRELASKVASTVNGATSANNHGEPPSPADARP) are disordered. Positions 33-45 (VASTVNGATSANN) are enriched in polar residues. The CCCH-type zinc finger occupies 106–211 (CLDISPYGNE…HVIFENSDVH (106 aa)). A disordered region spans residues 316 to 376 (VVSTNGCGPS…PLFLNSIRAP (61 aa)). A compositionally biased stretch (polar residues) spans 317–332 (VSTNGCGPSSSSQSTP).

It belongs to the herpesviridae NEC1 protein family. Forms a heterohexameric complex with NEC2. Interacts with capsid vertex specific component 2/CVC2; this interaction directs the capsid to the host inner nuclear membrane to initiate budding. Phosphorylated at serine residues in the N-terminus. This phosphorylation regulates the localization within the inner nuclear membrane. Phosphorylation by viral kinase UL97 at Ser-19 plays an important role for correct viral nuclear egress complex (NEC) localization.

Its subcellular location is the host nucleus inner membrane. In terms of biological role, plays an essential role in virion nuclear egress, the first step of virion release from infected cell. Within the host nucleus, NEC1 interacts with the newly formed capsid through the vertexes and directs it to the inner nuclear membrane by associating with NEC2. Induces the budding of the capsid at the inner nuclear membrane as well as its envelopment into the perinuclear space. There, the NEC1/NEC2 complex promotes the fusion of the enveloped capsid with the outer nuclear membrane and the subsequent release of the viral capsid into the cytoplasm where it will reach the secondary budding sites in the host Golgi or trans-Golgi network. In Homo sapiens (Human), this protein is Nuclear egress protein 1.